The chain runs to 116 residues: Large ribosomal subunit protein uL18 (116 aa).

The protein belongs to the universal ribosomal protein uL18 family. As to quaternary structure, part of the 50S ribosomal subunit; part of the 5S rRNA/L5/L18/L25 subcomplex. Contacts the 5S and 23S rRNAs.

Its function is as follows. This is one of the proteins that bind and probably mediate the attachment of the 5S RNA into the large ribosomal subunit, where it forms part of the central protuberance. The polypeptide is Large ribosomal subunit protein uL18 (Shewanella halifaxensis (strain HAW-EB4)).